Reading from the N-terminus, the 374-residue chain is MRAEIQTIVADIEKSLDLLAQRMNWETAEFRLEEFNARVEDPNLWDDPAAAQKLMRDRQSLVDAMDTYKSIRQDLQDSVELIELGEMEEDAEVVKDAEDTLKALKEKAAQKELEALLDGETDPNDAFLEIKAGAGGTEACDWASMLARMYVRWAESRGFSVELQEEQAGAEAGIKSATYQIKGHNAYGWLKSESGTHRLVRISPFGKGTRETSFAAVGAYPVIDDNIEIEVNPADIRIDTYRSSGAGGQHVNTTDSAVRITHEPTGIVVTSSEKSQHQNRDIAMKALKSRLYQLELDRRNAEVNALHEAKGDAGWGNQIRSYVMQPYQMVKDLRTNHETADTKGVLDGDLDGFMAATLAMKVAGKSRADAQGED.

At glutamine 249 the chain carries N5-methylglutamine.

Belongs to the prokaryotic/mitochondrial release factor family. Post-translationally, methylated by PrmC. Methylation increases the termination efficiency of RF2.

It is found in the cytoplasm. Its function is as follows. Peptide chain release factor 2 directs the termination of translation in response to the peptide chain termination codons UGA and UAA. This is Peptide chain release factor 2 from Ruegeria sp. (strain TM1040) (Silicibacter sp.).